The sequence spans 298 residues: Glyoxalase domain-containing protein 4 (298 aa).

The VOC 1 domain occupies 5-130 (RALHFVFKVG…GGYKFYLQDR (126 aa)). N6-succinyllysine is present on Lys-109. Ser-131 is subject to Phosphoserine. The region spanning 137–258 (PVLKVTLAVS…DGHEICFVGD (122 aa)) is the VOC 2 domain. Lys-273 carries the post-translational modification N6-succinyllysine.

It belongs to the glyoxalase I family. Interacts with NUDT9.

Its subcellular location is the mitochondrion. This is Glyoxalase domain-containing protein 4 (Glod4) from Rattus norvegicus (Rat).